The primary structure comprises 492 residues: Ketol-acid reductoisomerase (NADP(+)) (492 aa).

The 194-residue stretch at 15 to 208 (AQLGKCRFMA…GGHRAGVLES (194 aa)) folds into the KARI N-terminal Rossmann domain. Residues 45 to 48 (CGAQ), Arg-68, Arg-76, Ser-78, and 108 to 110 (DKQ) each bind NADP(+). His-132 is a catalytic residue. Gly-158 provides a ligand contact to NADP(+). 2 KARI C-terminal knotted domains span residues 209–344 (SFVA…NAPQ) and 345–485 (FEGK…MTDM). Asp-217, Glu-221, Glu-389, and Glu-393 together coordinate Mg(2+). Residue Ser-414 participates in substrate binding.

It belongs to the ketol-acid reductoisomerase family. Requires Mg(2+) as cofactor.

It carries out the reaction (2R)-2,3-dihydroxy-3-methylbutanoate + NADP(+) = (2S)-2-acetolactate + NADPH + H(+). The enzyme catalyses (2R,3R)-2,3-dihydroxy-3-methylpentanoate + NADP(+) = (S)-2-ethyl-2-hydroxy-3-oxobutanoate + NADPH + H(+). Its pathway is amino-acid biosynthesis; L-isoleucine biosynthesis; L-isoleucine from 2-oxobutanoate: step 2/4. It functions in the pathway amino-acid biosynthesis; L-valine biosynthesis; L-valine from pyruvate: step 2/4. Involved in the biosynthesis of branched-chain amino acids (BCAA). Catalyzes an alkyl-migration followed by a ketol-acid reduction of (S)-2-acetolactate (S2AL) to yield (R)-2,3-dihydroxy-isovalerate. In the isomerase reaction, S2AL is rearranged via a Mg-dependent methyl migration to produce 3-hydroxy-3-methyl-2-ketobutyrate (HMKB). In the reductase reaction, this 2-ketoacid undergoes a metal-dependent reduction by NADPH to yield (R)-2,3-dihydroxy-isovalerate. This is Ketol-acid reductoisomerase (NADP(+)) from Yersinia enterocolitica serotype O:8 / biotype 1B (strain NCTC 13174 / 8081).